We begin with the raw amino-acid sequence, 202 residues long: MSRRLDLDALDLSTKTIPAQAAIGTYMSSTIIKAPASSVWQAVNDTDSWPIWNTFCPGATIREQPDTTKSRSGRLQLGTKMTLHLNWNPRGTKPKQMDVGLVVTEFDPPIKGRETPGRIAWATDSSAKGFPSWLLYAERVTELHESEEWDGEECQSVTQVLSWESQRGPLAYVVRWFMGKNFKMCLRVQADDMTSFVEGQKL.

Its function is as follows. Part of the gene cluster that mediates the biosynthesis of oxopyrrolidines, polyketide-amino acid hybrid compounds with feature structures of tetramic acid. Does not seem to play a role in oxopyrrolidines A and B biosynthesis. The chain is Oxopyrrolidines biosynthesis cluster protein O from Penicillium oxalicum (strain 114-2 / CGMCC 5302) (Penicillium decumbens).